A 635-amino-acid polypeptide reads, in one-letter code: Phosphomethylpyrimidine synthase (635 aa).

Over residues 1–14 the composition is skewed to polar residues; the sequence is MNATVSSAVQSSLP. Positions 1–41 are disordered; sequence MNATVSSAVQSSLPFSGKTAQVDEGTVKPLPRSQKTYLSGS. Residues N240, M269, Y298, H334, 354–356, 395–398, and E434 contribute to the substrate site; these read SRG and DGLR. H438 is a Zn(2+) binding site. Substrate is bound at residue Y461. Residue H502 coordinates Zn(2+). Residues C582, C585, and C590 each coordinate [4Fe-4S] cluster.

Belongs to the ThiC family. As to quaternary structure, homodimer. [4Fe-4S] cluster is required as a cofactor.

The enzyme catalyses 5-amino-1-(5-phospho-beta-D-ribosyl)imidazole + S-adenosyl-L-methionine = 4-amino-2-methyl-5-(phosphooxymethyl)pyrimidine + CO + 5'-deoxyadenosine + formate + L-methionine + 3 H(+). It participates in cofactor biosynthesis; thiamine diphosphate biosynthesis. In terms of biological role, catalyzes the synthesis of the hydroxymethylpyrimidine phosphate (HMP-P) moiety of thiamine from aminoimidazole ribotide (AIR) in a radical S-adenosyl-L-methionine (SAM)-dependent reaction. This is Phosphomethylpyrimidine synthase from Nitrosospira multiformis (strain ATCC 25196 / NCIMB 11849 / C 71).